Here is a 192-residue protein sequence, read N- to C-terminus: Fe/S biogenesis protein NfuA (192 aa).

[4Fe-4S] cluster is bound by residues cysteine 149 and cysteine 152.

The protein belongs to the NfuA family. Homodimer. It depends on [4Fe-4S] cluster as a cofactor.

Its function is as follows. Involved in iron-sulfur cluster biogenesis. Binds a 4Fe-4S cluster, can transfer this cluster to apoproteins, and thereby intervenes in the maturation of Fe/S proteins. Could also act as a scaffold/chaperone for damaged Fe/S proteins. The protein is Fe/S biogenesis protein NfuA of Shewanella putrefaciens (strain CN-32 / ATCC BAA-453).